A 91-amino-acid polypeptide reads, in one-letter code: Large ribosomal subunit protein bL27 (91 aa).

This sequence belongs to the bacterial ribosomal protein bL27 family.

This chain is Large ribosomal subunit protein bL27, found in Deinococcus deserti (strain DSM 17065 / CIP 109153 / LMG 22923 / VCD115).